The chain runs to 229 residues: 2-phytyl-1,4-naphtoquinone methyltransferase (229 aa).

It belongs to the class I-like SAM-binding methyltransferase superfamily. MenG/UbiE family.

The enzyme catalyses demethylphylloquinol + S-adenosyl-L-methionine = phylloquinol + S-adenosyl-L-homocysteine + H(+). It functions in the pathway cofactor biosynthesis; phylloquinone biosynthesis. Methyltransferase required for the conversion of 2-phytyl-1,4-beta-naphthoquinol to phylloquinol. This chain is 2-phytyl-1,4-naphtoquinone methyltransferase, found in Nostoc sp. (strain PCC 7120 / SAG 25.82 / UTEX 2576).